Here is a 221-residue protein sequence, read N- to C-terminus: Large ribosomal subunit protein uL3 (221 aa).

It belongs to the universal ribosomal protein uL3 family. As to quaternary structure, part of the 50S ribosomal subunit. Forms a cluster with proteins L14 and L19.

One of the primary rRNA binding proteins, it binds directly near the 3'-end of the 23S rRNA, where it nucleates assembly of the 50S subunit. This Chlamydia trachomatis serovar L2 (strain ATCC VR-902B / DSM 19102 / 434/Bu) protein is Large ribosomal subunit protein uL3.